Reading from the N-terminus, the 534-residue chain is Zinc finger protein 397 (534 aa).

Residue Ser31 is modified to Phosphoserine. Positions 50 to 132 (RQQFRKFCYQ…TLLEDLEREF (83 aa)) constitute an SCAN box domain. Residues Lys55, Lys171, Lys202, and Lys252 each participate in a glycyl lysine isopeptide (Lys-Gly) (interchain with G-Cter in SUMO2) cross-link. Positions 197–242 (DISGEKSQRLSQEPSFGGFSEHKSSLEWQQGSAPGETLRRSPSQRA) are disordered. 9 C2H2-type zinc fingers span residues 285 to 307 (YRCDICGHSFKQHSSLTQHQRIH), 313 to 335 (YKCNQCGKAFSLRSYLIIHQRIH), 341 to 363 (YECSECGKAFNQSSALIRHRKIH), 369 to 391 (CKCNECGKAFSQSSYLIIHQRIH), 397 to 419 (YECNECGKTFSQSSKLIRHQRIH), 425 to 447 (YECNECGKAFRQSSELITHQRIH), 453 to 475 (YECNECGKAFSLSSNLIRHQRIH), 481 to 503 (YQCNECGKTFKRSSALVQHQRIH), and 509 to 531 (YICSECGKAFRHRSVLTRHQRVH).

It belongs to the krueppel C2H2-type zinc-finger protein family.

The protein resides in the nucleus. Its function is as follows. DNA-dependent transcriptional repressor. The protein is Zinc finger protein 397 (ZNF397) of Bos taurus (Bovine).